Reading from the N-terminus, the 1124-residue chain is DNA-directed RNA polymerase subunit Rpo2 (1124 aa).

Positions 1061, 1064, 1079, and 1082 each coordinate Zn(2+).

It belongs to the RNA polymerase beta chain family. In terms of assembly, part of the 13-subunit RNA polymerase complex. Zn(2+) serves as cofactor.

The protein localises to the cytoplasm. It carries out the reaction RNA(n) + a ribonucleoside 5'-triphosphate = RNA(n+1) + diphosphate. In terms of biological role, DNA-dependent RNA polymerase (RNAP) catalyzes the transcription of DNA into RNA using the four ribonucleoside triphosphates as substrates. This subunit is involved in DNA promoter recognition. The sequence is that of DNA-directed RNA polymerase subunit Rpo2 from Saccharolobus solfataricus (strain ATCC 35092 / DSM 1617 / JCM 11322 / P2) (Sulfolobus solfataricus).